A 314-amino-acid polypeptide reads, in one-letter code: Acetyl-coenzyme A carboxylase carboxyl transferase subunit alpha (314 aa).

One can recognise a CoA carboxyltransferase C-terminal domain in the interval 32–289 (EIDMLEASLK…KKMFLKHLNE (258 aa)).

The protein belongs to the AccA family. As to quaternary structure, acetyl-CoA carboxylase is a heterohexamer composed of biotin carboxyl carrier protein (AccB), biotin carboxylase (AccC) and two subunits each of ACCase subunit alpha (AccA) and ACCase subunit beta (AccD).

The protein resides in the cytoplasm. It catalyses the reaction N(6)-carboxybiotinyl-L-lysyl-[protein] + acetyl-CoA = N(6)-biotinyl-L-lysyl-[protein] + malonyl-CoA. It functions in the pathway lipid metabolism; malonyl-CoA biosynthesis; malonyl-CoA from acetyl-CoA: step 1/1. In terms of biological role, component of the acetyl coenzyme A carboxylase (ACC) complex. First, biotin carboxylase catalyzes the carboxylation of biotin on its carrier protein (BCCP) and then the CO(2) group is transferred by the carboxyltransferase to acetyl-CoA to form malonyl-CoA. The protein is Acetyl-coenzyme A carboxylase carboxyl transferase subunit alpha of Staphylococcus epidermidis (strain ATCC 12228 / FDA PCI 1200).